We begin with the raw amino-acid sequence, 476 residues long: Probable serine carboxypeptidase CPVL (476 aa).

A signal peptide spans 1 to 22 (MVGAMWKVIVSLVLLMPGPCDG). N-linked (GlcNAc...) asparagine glycosylation is found at N81 and N132. S204 is a catalytic residue. Residues N307 and N346 are each glycosylated (N-linked (GlcNAc...) asparagine). Active-site residues include D388 and H448.

This sequence belongs to the peptidase S10 family. Expressed in macrophages but not in other leukocytes. Abundantly expressed in heart and kidney. Also expressed in spleen, leukocytes, and placenta.

May be involved in the digestion of phagocytosed particles in the lysosome, participation in an inflammatory protease cascade, and trimming of peptides for antigen presentation. This is Probable serine carboxypeptidase CPVL (CPVL) from Homo sapiens (Human).